The chain runs to 155 residues: Xanthine-guanine phosphoribosyltransferase (155 aa).

5-phospho-alpha-D-ribose 1-diphosphate-binding positions include 37-38 (RG), Arg69, and 90-98 (EDLVDTGTT). Arg69 contacts GMP. A Mg(2+)-binding site is contributed by Asp91. Residues Asp94 and Ile137 each contribute to the guanine site. Asp94 and Ile137 together coordinate xanthine. GMP contacts are provided by residues 94–98 (DTGTT) and 136–137 (WI).

Belongs to the purine/pyrimidine phosphoribosyltransferase family. XGPT subfamily. In terms of assembly, homotetramer. It depends on Mg(2+) as a cofactor.

Its subcellular location is the cell inner membrane. It catalyses the reaction GMP + diphosphate = guanine + 5-phospho-alpha-D-ribose 1-diphosphate. The enzyme catalyses XMP + diphosphate = xanthine + 5-phospho-alpha-D-ribose 1-diphosphate. It carries out the reaction IMP + diphosphate = hypoxanthine + 5-phospho-alpha-D-ribose 1-diphosphate. The protein operates within purine metabolism; GMP biosynthesis via salvage pathway; GMP from guanine: step 1/1. It functions in the pathway purine metabolism; XMP biosynthesis via salvage pathway; XMP from xanthine: step 1/1. Purine salvage pathway enzyme that catalyzes the transfer of the ribosyl-5-phosphate group from 5-phospho-alpha-D-ribose 1-diphosphate (PRPP) to the N9 position of the 6-oxopurines guanine and xanthine to form the corresponding ribonucleotides GMP (guanosine 5'-monophosphate) and XMP (xanthosine 5'-monophosphate), with the release of PPi. To a lesser extent, also acts on hypoxanthine. The sequence is that of Xanthine-guanine phosphoribosyltransferase from Aeromonas hydrophila subsp. hydrophila (strain ATCC 7966 / DSM 30187 / BCRC 13018 / CCUG 14551 / JCM 1027 / KCTC 2358 / NCIMB 9240 / NCTC 8049).